We begin with the raw amino-acid sequence, 433 residues long: MTDFSPREIVSELDRFIVGQSDAKRAVSIALRNRWRRLQLEGALREEVLPKNILMIGPTGVGKTEIARRLAKLAGAPFIKVEATKFTEVGYVGRDVEQIIRDLVEVAIAQVREKKRKDVQARAQLAAEERVLDALVGASASPATRDSFRKKLRAGELNDKEIEVETQASSGSPMFEIPGMPGAQIGAVSLGDIFGKMGGRTKTRRLTVADSHEILVNEEADKLLDSDQLTIEAINAVENNGIVFLDEIDKICVRDGRSGGEVSREGVQRDLLPLIEGTTVSTKHGAVKTDHILFIASGAFHIAKPSDLLPELQGRLPIRVELNALSRDDMRRILTEPEVSLIKQYVALLGTEGVTLEFGDDAIDALADVAVQVNSTVENIGARRLQTVMERVLDEISFSAPDRSGETIRIDAEFVQKHVGDLAKNADLSRFIL.

Residues V18, 60–65, D246, E311, and R383 each bind ATP; that span reads GVGKTE.

It belongs to the ClpX chaperone family. HslU subfamily. As to quaternary structure, a double ring-shaped homohexamer of HslV is capped on each side by a ring-shaped HslU homohexamer. The assembly of the HslU/HslV complex is dependent on binding of ATP.

It localises to the cytoplasm. ATPase subunit of a proteasome-like degradation complex; this subunit has chaperone activity. The binding of ATP and its subsequent hydrolysis by HslU are essential for unfolding of protein substrates subsequently hydrolyzed by HslV. HslU recognizes the N-terminal part of its protein substrates and unfolds these before they are guided to HslV for hydrolysis. The protein is ATP-dependent protease ATPase subunit HslU of Rhodopseudomonas palustris (strain BisA53).